The sequence spans 59 residues: Protein SspF (59 aa).

Belongs to the alpha/beta-type SASP family.

Its function is as follows. May play some important role in either sporulation or the dormant spore. The protein is Protein SspF (sspF) of Bacillus cereus (strain ATCC 14579 / DSM 31 / CCUG 7414 / JCM 2152 / NBRC 15305 / NCIMB 9373 / NCTC 2599 / NRRL B-3711).